The sequence spans 142 residues: Nucleoside diphosphate kinase (142 aa).

ATP contacts are provided by Lys11, Phe59, Arg87, Thr93, Arg104, and Asn114. Catalysis depends on His117, which acts as the Pros-phosphohistidine intermediate.

It belongs to the NDK family. As to quaternary structure, homotetramer. The cofactor is Mg(2+).

It localises to the cytoplasm. The enzyme catalyses a 2'-deoxyribonucleoside 5'-diphosphate + ATP = a 2'-deoxyribonucleoside 5'-triphosphate + ADP. It catalyses the reaction a ribonucleoside 5'-diphosphate + ATP = a ribonucleoside 5'-triphosphate + ADP. Major role in the synthesis of nucleoside triphosphates other than ATP. The ATP gamma phosphate is transferred to the NDP beta phosphate via a ping-pong mechanism, using a phosphorylated active-site intermediate. This Wigglesworthia glossinidia brevipalpis protein is Nucleoside diphosphate kinase.